The sequence spans 536 residues: Cytochrome P450 78A7 (536 aa).

A helical transmembrane segment spans residues 36-56 (LFLAVVFLSIVTWALAGGGGV). Residue Cys481 coordinates heme.

The protein belongs to the cytochrome P450 family. The cofactor is heme.

It localises to the membrane. Its function is as follows. Functions probably in association with CYP78A5 in regulating relative growth of the shoot apical meristem and plant organs via a non-cell-autonomous signal. This is Cytochrome P450 78A7 (CYP78A7) from Arabidopsis thaliana (Mouse-ear cress).